The sequence spans 626 residues: Biosynthetic arginine decarboxylase (626 aa).

Lys-99 carries the N6-(pyridoxal phosphate)lysine modification. 279–289 (VDVGGGLGVDY) serves as a coordination point for substrate.

The protein belongs to the Orn/Lys/Arg decarboxylase class-II family. SpeA subfamily. Mg(2+) is required as a cofactor. The cofactor is pyridoxal 5'-phosphate.

It carries out the reaction L-arginine + H(+) = agmatine + CO2. It participates in amine and polyamine biosynthesis; agmatine biosynthesis; agmatine from L-arginine: step 1/1. Its function is as follows. Catalyzes the biosynthesis of agmatine from arginine. This Chromobacterium violaceum (strain ATCC 12472 / DSM 30191 / JCM 1249 / CCUG 213 / NBRC 12614 / NCIMB 9131 / NCTC 9757 / MK) protein is Biosynthetic arginine decarboxylase.